Consider the following 96-residue polypeptide: MAKYEILYIIRPNIEEEAKNALVARFDSILTNNGATIVESKDWEKRRLAYEINDFREGLYHIVNLEATDAVALNEFDRLSKINGDILRHMIVKLDA.

Belongs to the bacterial ribosomal protein bS6 family.

Binds together with bS18 to 16S ribosomal RNA. The protein is Small ribosomal subunit protein bS6 of Streptococcus equi subsp. zooepidemicus (strain MGCS10565).